We begin with the raw amino-acid sequence, 233 residues long: Large ribosomal subunit protein uL2 (233 aa).

Positions 194-233 are disordered; it reads HPHGGGNHQHVGRPSTVGRGTPPGRKVGRLSPKRRKKYGR. A compositionally biased stretch (basic residues) spans 219 to 233; it reads KVGRLSPKRRKKYGR.

This sequence belongs to the universal ribosomal protein uL2 family. Part of the 50S ribosomal subunit. Forms a bridge to the 30S subunit in the 70S ribosome.

Functionally, one of the primary rRNA binding proteins. Required for association of the 30S and 50S subunits to form the 70S ribosome, for tRNA binding and peptide bond formation. It has been suggested to have peptidyltransferase activity; this is somewhat controversial. Makes several contacts with the 16S rRNA in the 70S ribosome. The sequence is that of Large ribosomal subunit protein uL2 from Picrophilus torridus (strain ATCC 700027 / DSM 9790 / JCM 10055 / NBRC 100828 / KAW 2/3).